The chain runs to 189 residues: GTPase HRas (189 aa).

At M1 the chain carries N-acetylmethionine; in GTPase HRas; alternate. N-acetylthreonine; in GTPase HRas, N-terminally processed is present on T2. GTP is bound by residues 13–18 (GVGKSA), 29–35 (VDEYDPT), 59–60 (AG), 116–119 (NKCD), and 145–147 (SAK). The Effector region motif lies at 32-40 (YDPTIEDSY). T35 carries (Microbial infection) O-linked (Glc) threonine; by P.sordellii toxin TcsL glycosylation. C118 carries the post-translational modification S-nitrosocysteine. The interval 166–185 (HKLRKLNPPDESGPGCMSCK) is hypervariable region. K170 is covalently cross-linked (Glycyl lysine isopeptide (Lys-Gly) (interchain with G-Cter in ubiquitin)). Residue C181 is the site of S-palmitoyl cysteine attachment. C184 carries the S-(15-deoxy-Delta12,14-prostaglandin J2-9-yl)cysteine; alternate lipid modification. C184 carries the S-palmitoyl cysteine; alternate lipid modification. C186 carries the cysteine methyl ester modification. C186 is lipidated: S-farnesyl cysteine. Residues 187 to 189 (VLS) constitute a propeptide, removed in mature form.

This sequence belongs to the small GTPase superfamily. Ras family. In its GTP-bound form interacts with PLCE1. Interacts with TBC1D10C. Interacts with RGL3. Interacts with HSPD1. Found in a complex with at least BRAF, HRAS, MAP2K1, MAPK3 and RGS14. Interacts (active GTP-bound form) with RGS14 (via RBD 1 domain). Forms a signaling complex with RASGRP1 and DGKZ. Interacts with RASSF5. Interacts with PDE6D. Interacts with IKZF3. Interacts with RACK1. Interacts with PIK3CG; the interaction is required for membrane recruitment and beta-gamma G protein dimer-dependent activation of the PI3K gamma complex PIK3CG:PIK3R6. Interacts with RAPGEF2. Interacts (active GTP-bound form) with both SHOC2 and PP1c (all isoforms) to form a tertiary complex; SHOC2 and PP1c preferably bind M-Ras/MRAS, but they also bind K-Ras/KRAS, N-Ras/NRAS and H-Ras/HRAS. Interacts (GTP-bound form) with MAPKAP1/SIN1; inhibiting H-Ras/HRAS activity. Palmitoylated by the ZDHHC9-GOLGA7 complex. A continuous cycle of de- and re-palmitoylation regulates rapid exchange between plasma membrane and Golgi. In terms of processing, S-nitrosylated; critical for redox regulation. Important for stimulating guanine nucleotide exchange. No structural perturbation on nitrosylation. Post-translationally, the covalent modification of cysteine by 15-deoxy-Delta12,14-prostaglandin-J2 is autocatalytic and reversible. It may occur as an alternative to other cysteine modifications, such as S-nitrosylation and S-palmitoylation. Acetylation at Lys-104 prevents interaction with guanine nucleotide exchange factors (GEFs). In terms of processing, fatty-acylated at Lys-170. Post-translationally, ubiquitinated by the BCR(LZTR1) E3 ubiquitin ligase complex at Lys-170 in a non-degradative manner, leading to inhibit Ras signaling by decreasing Ras association with membranes. (Microbial infection) Glucosylated at Thr-35 by P.sordellii toxin TcsL. Monoglucosylation completely prevents the recognition of the downstream effector, blocking the GTPases in their inactive form, leading to inhibit Ras signaling. Widely expressed.

The protein resides in the cell membrane. It is found in the golgi apparatus. It localises to the golgi apparatus membrane. Its subcellular location is the nucleus. The protein localises to the cytoplasm. The protein resides in the perinuclear region. It catalyses the reaction GTP + H2O = GDP + phosphate + H(+). With respect to regulation, alternates between an inactive form bound to GDP and an active form bound to GTP. Activated by a guanine nucleotide-exchange factor (GEF) and inactivated by a GTPase-activating protein (GAP). Its function is as follows. Involved in the activation of Ras protein signal transduction. Ras proteins bind GDP/GTP and possess intrinsic GTPase activity. The protein is GTPase HRas (HRAS) of Homo sapiens (Human).